Here is a 347-residue protein sequence, read N- to C-terminus: NADH-ubiquinone oxidoreductase chain 2 (347 aa).

A run of 10 helical transmembrane segments spans residues 13–33 (IFTG…WVGL), 60–80 (FLTQ…NSML), 96–116 (LMIM…FWVP), 123–143 (PLMS…SIMY), 149–169 (LNVN…SWGG), 178–198 (ILAY…PYNP), 201–221 (TILN…LLNL), 247–267 (TLLS…WVII), 274–294 (NSLI…YFYL), and 326–346 (LPTL…MLMI).

It belongs to the complex I subunit 2 family. Core subunit of respiratory chain NADH dehydrogenase (Complex I) which is composed of 45 different subunits. Interacts with TMEM242.

It is found in the mitochondrion inner membrane. The catalysed reaction is a ubiquinone + NADH + 5 H(+)(in) = a ubiquinol + NAD(+) + 4 H(+)(out). In terms of biological role, core subunit of the mitochondrial membrane respiratory chain NADH dehydrogenase (Complex I) which catalyzes electron transfer from NADH through the respiratory chain, using ubiquinone as an electron acceptor. Essential for the catalytic activity and assembly of complex I. The sequence is that of NADH-ubiquinone oxidoreductase chain 2 from Pan troglodytes (Chimpanzee).